The primary structure comprises 1413 residues: DNA-directed RNA polymerase subunit beta' (1413 aa).

Positions 70, 72, 85, and 88 each coordinate Zn(2+). The Mg(2+) site is built by aspartate 460, aspartate 462, and aspartate 464. The Zn(2+) site is built by cysteine 819, cysteine 893, cysteine 900, and cysteine 903.

Belongs to the RNA polymerase beta' chain family. In terms of assembly, the RNAP catalytic core consists of 2 alpha, 1 beta, 1 beta' and 1 omega subunit. When a sigma factor is associated with the core the holoenzyme is formed, which can initiate transcription. Requires Mg(2+) as cofactor. It depends on Zn(2+) as a cofactor.

It catalyses the reaction RNA(n) + a ribonucleoside 5'-triphosphate = RNA(n+1) + diphosphate. Its function is as follows. DNA-dependent RNA polymerase catalyzes the transcription of DNA into RNA using the four ribonucleoside triphosphates as substrates. The polypeptide is DNA-directed RNA polymerase subunit beta' (Burkholderia vietnamiensis (strain G4 / LMG 22486) (Burkholderia cepacia (strain R1808))).